The sequence spans 99 residues: MLEQQRNPAEALIVSVLNSQSQVTNKPLRESVKQALKNYFAQLDGEDATDLYELVLSEVEHPMLDMVMQYTRGNQTRAALMLGVNRGTLRKKLKKYGMS.

The H-T-H motif DNA-binding region spans 75–94 (QTRAALMLGVNRGTLRKKLK).

Belongs to the transcriptional regulatory Fis family. As to quaternary structure, homodimer.

Activates ribosomal RNA transcription. Plays a direct role in upstream activation of rRNA promoters. This chain is DNA-binding protein Fis, found in Actinobacillus succinogenes (strain ATCC 55618 / DSM 22257 / CCUG 43843 / 130Z).